We begin with the raw amino-acid sequence, 145 residues long: Large ribosomal subunit protein uL16 (145 aa).

The protein belongs to the universal ribosomal protein uL16 family. Part of the 50S ribosomal subunit.

In terms of biological role, binds 23S rRNA and is also seen to make contacts with the A and possibly P site tRNAs. The polypeptide is Large ribosomal subunit protein uL16 (Lactobacillus johnsonii (strain CNCM I-12250 / La1 / NCC 533)).